The sequence spans 638 residues: Glucans biosynthesis glucosyltransferase H (638 aa).

Helical transmembrane passes span 60–82 (FYLI…AVMW), 97–119 (FMFL…FCVV), 415–437 (IGHY…IPLV), 464–486 (LWIF…FALL), 499–521 (LRVL…VVMY), and 578–600 (LAMW…ALTS).

It belongs to the glycosyltransferase 2 family. OpgH subfamily.

The protein resides in the cell inner membrane. It participates in glycan metabolism; osmoregulated periplasmic glucan (OPG) biosynthesis. Its function is as follows. Involved in the biosynthesis of osmoregulated periplasmic glucans (OPGs). The chain is Glucans biosynthesis glucosyltransferase H from Xylella fastidiosa (strain 9a5c).